A 139-amino-acid polypeptide reads, in one-letter code: Holo-[acyl-carrier-protein] synthase (139 aa).

Mg(2+)-binding residues include aspartate 8 and glutamate 61.

This sequence belongs to the P-Pant transferase superfamily. AcpS family. Requires Mg(2+) as cofactor.

It localises to the cytoplasm. It catalyses the reaction apo-[ACP] + CoA = holo-[ACP] + adenosine 3',5'-bisphosphate + H(+). Transfers the 4'-phosphopantetheine moiety from coenzyme A to a Ser of acyl-carrier-protein. In Nitrobacter winogradskyi (strain ATCC 25391 / DSM 10237 / CIP 104748 / NCIMB 11846 / Nb-255), this protein is Holo-[acyl-carrier-protein] synthase.